Consider the following 356-residue polypeptide: Nicotinate-nucleotide--dimethylbenzimidazole phosphoribosyltransferase (356 aa).

Glu317 serves as the catalytic Proton acceptor.

The protein belongs to the CobT family. In terms of assembly, homodimer.

It catalyses the reaction 5,6-dimethylbenzimidazole + nicotinate beta-D-ribonucleotide = alpha-ribazole 5'-phosphate + nicotinate + H(+). It participates in nucleoside biosynthesis; alpha-ribazole biosynthesis; alpha-ribazole from 5,6-dimethylbenzimidazole: step 1/2. In terms of biological role, catalyzes the synthesis of alpha-ribazole-5'-phosphate from nicotinate mononucleotide (NAMN) and 5,6-dimethylbenzimidazole (DMB). In Salmonella paratyphi A (strain ATCC 9150 / SARB42), this protein is Nicotinate-nucleotide--dimethylbenzimidazole phosphoribosyltransferase.